A 237-amino-acid polypeptide reads, in one-letter code: Phosphatidylserine decarboxylase proenzyme (237 aa).

Serine 206 serves as the catalytic Schiff-base intermediate with substrate; via pyruvic acid. Serine 206 carries the post-translational modification Pyruvic acid (Ser); by autocatalysis.

The protein belongs to the phosphatidylserine decarboxylase family. PSD-A subfamily. As to quaternary structure, heterodimer of a large membrane-associated beta subunit and a small pyruvoyl-containing alpha subunit. It depends on pyruvate as a cofactor. In terms of processing, is synthesized initially as an inactive proenzyme. Formation of the active enzyme involves a self-maturation process in which the active site pyruvoyl group is generated from an internal serine residue via an autocatalytic post-translational modification. Two non-identical subunits are generated from the proenzyme in this reaction, and the pyruvate is formed at the N-terminus of the alpha chain, which is derived from the carboxyl end of the proenzyme. The post-translation cleavage follows an unusual pathway, termed non-hydrolytic serinolysis, in which the side chain hydroxyl group of the serine supplies its oxygen atom to form the C-terminus of the beta chain, while the remainder of the serine residue undergoes an oxidative deamination to produce ammonia and the pyruvoyl prosthetic group on the alpha chain.

The protein resides in the cell membrane. It catalyses the reaction a 1,2-diacyl-sn-glycero-3-phospho-L-serine + H(+) = a 1,2-diacyl-sn-glycero-3-phosphoethanolamine + CO2. It functions in the pathway phospholipid metabolism; phosphatidylethanolamine biosynthesis; phosphatidylethanolamine from CDP-diacylglycerol: step 2/2. In terms of biological role, catalyzes the formation of phosphatidylethanolamine (PtdEtn) from phosphatidylserine (PtdSer). The sequence is that of Phosphatidylserine decarboxylase proenzyme from Rhodococcus erythropolis (strain PR4 / NBRC 100887).